The sequence spans 308 residues: D-2-hydroxyacid dehydrogenase (308 aa).

NAD(+)-binding positions include 145–146 (TL), 224–226 (VAR), and Asp250. Arg226 is an active-site residue. Glu255 is a catalytic residue. The active-site Proton donor is the His274. Position 274–277 (274–277 (HVSA)) interacts with NAD(+).

Belongs to the D-isomer specific 2-hydroxyacid dehydrogenase family. Homotetramer.

Functionally, catalyzes the stereospecific NAD(P)H-dependent reduction of 2-ketocarboxylic acids into the corresponding D-2-hydroxycarboxylic acids. Can use both NADPH or NADH as reductant, displaying a marked preference for NADPH over NADH. Shows a broad substrate specificity, although it displays a marked preference for the 2-ketocarboxylic acids having an unbranched chain of 4-5 carbon atoms. The protein is D-2-hydroxyacid dehydrogenase (ddh) of Haloferax mediterranei (strain ATCC 33500 / DSM 1411 / JCM 8866 / NBRC 14739 / NCIMB 2177 / R-4) (Halobacterium mediterranei).